Here is a 204-residue protein sequence, read N- to C-terminus: LexA repressor (204 aa).

The segment at residues 30–50 (IREICQGVGLSSPSTVHHHLK) is a DNA-binding region (H-T-H motif). Catalysis depends on for autocatalytic cleavage activity residues Ser125 and Lys162.

It belongs to the peptidase S24 family. In terms of assembly, homodimer.

The enzyme catalyses Hydrolysis of Ala-|-Gly bond in repressor LexA.. Represses a number of genes involved in the response to DNA damage (SOS response), including recA and lexA. In the presence of single-stranded DNA, RecA interacts with LexA causing an autocatalytic cleavage which disrupts the DNA-binding part of LexA, leading to derepression of the SOS regulon and eventually DNA repair. In Carboxydothermus hydrogenoformans (strain ATCC BAA-161 / DSM 6008 / Z-2901), this protein is LexA repressor.